Here is a 534-residue protein sequence, read N- to C-terminus: CTP synthase (534 aa).

Residues Met-1–Leu-267 are amidoligase domain. CTP is bound at residue Ser-13. Residue Ser-13 participates in UTP binding. Ser-14 to Ile-19 is an ATP binding site. Tyr-54 contacts L-glutamine. Asp-71 contributes to the ATP binding site. Mg(2+)-binding residues include Asp-71 and Glu-141. Residues Asp-148–Glu-150, Lys-188–Gln-193, and Lys-224 contribute to the CTP site. UTP contacts are provided by residues Lys-188 to Gln-193 and Lys-224. Arg-240–Val-242 is a binding site for ATP. A Glutamine amidotransferase type-1 domain is found at Lys-292–Asn-534. Gly-354 serves as a coordination point for L-glutamine. The active-site Nucleophile; for glutamine hydrolysis is Cys-381. Residues Leu-382–Gln-385, Glu-405, and Arg-463 contribute to the L-glutamine site. Active-site residues include His-508 and Glu-510.

Belongs to the CTP synthase family. As to quaternary structure, homotetramer.

It catalyses the reaction UTP + L-glutamine + ATP + H2O = CTP + L-glutamate + ADP + phosphate + 2 H(+). It carries out the reaction L-glutamine + H2O = L-glutamate + NH4(+). The enzyme catalyses UTP + NH4(+) + ATP = CTP + ADP + phosphate + 2 H(+). It functions in the pathway pyrimidine metabolism; CTP biosynthesis via de novo pathway; CTP from UDP: step 2/2. Allosterically activated by GTP, when glutamine is the substrate; GTP has no effect on the reaction when ammonia is the substrate. The allosteric effector GTP functions by stabilizing the protein conformation that binds the tetrahedral intermediate(s) formed during glutamine hydrolysis. Inhibited by the product CTP, via allosteric rather than competitive inhibition. Its function is as follows. Catalyzes the ATP-dependent amination of UTP to CTP with either L-glutamine or ammonia as the source of nitrogen. Regulates intracellular CTP levels through interactions with the four ribonucleotide triphosphates. This is CTP synthase from Streptococcus pyogenes serotype M1.